The sequence spans 150 residues: Ribonuclease H (150 aa).

Residues 1–141 (MKSIEVHTDG…VDVLARNQAT (141 aa)) enclose the RNase H type-1 domain. 4 residues coordinate Mg(2+): Asp9, Glu47, Asp69, and Asp133.

Belongs to the RNase H family. As to quaternary structure, monomer. The cofactor is Mg(2+).

The protein resides in the cytoplasm. It catalyses the reaction Endonucleolytic cleavage to 5'-phosphomonoester.. Its function is as follows. Endonuclease that specifically degrades the RNA of RNA-DNA hybrids. This chain is Ribonuclease H, found in Xanthomonas oryzae pv. oryzae (strain MAFF 311018).